Here is a 126-residue protein sequence, read N- to C-terminus: Phosphoribosyl-AMP cyclohydrolase (126 aa).

Position 82 (aspartate 82) interacts with Mg(2+). Cysteine 83 provides a ligand contact to Zn(2+). Positions 84 and 86 each coordinate Mg(2+). The Zn(2+) site is built by cysteine 99 and cysteine 106.

Belongs to the PRA-CH family. As to quaternary structure, homodimer. Mg(2+) is required as a cofactor. Zn(2+) serves as cofactor.

It localises to the cytoplasm. It catalyses the reaction 1-(5-phospho-beta-D-ribosyl)-5'-AMP + H2O = 1-(5-phospho-beta-D-ribosyl)-5-[(5-phospho-beta-D-ribosylamino)methylideneamino]imidazole-4-carboxamide. The protein operates within amino-acid biosynthesis; L-histidine biosynthesis; L-histidine from 5-phospho-alpha-D-ribose 1-diphosphate: step 3/9. Functionally, catalyzes the hydrolysis of the adenine ring of phosphoribosyl-AMP. This is Phosphoribosyl-AMP cyclohydrolase from Sphingopyxis alaskensis (strain DSM 13593 / LMG 18877 / RB2256) (Sphingomonas alaskensis).